The primary structure comprises 279 residues: Beta-porphyranase E (279 aa).

The N-terminal stretch at 1-18 (MGNTMLLTLLLVVVAAYG) is a signal peptide. The 259-residue stretch at 19–277 (QTPPPPEGFR…WVRSYTLLPV (259 aa)) folds into the GH16 domain. The substrate site is built by Trp-56, Arg-60, Glu-141, Glu-146, and Glu-243. The Nucleophile role is filled by Glu-141. Catalysis depends on Glu-146, which acts as the Proton donor.

This sequence belongs to the glycosyl hydrolase 16 family.

Its subcellular location is the periplasm. The catalysed reaction is Hydrolysis of beta-D-galactopyranose-(1-&gt;4)-alpha-L-galactopyranose-6-sulfate linkages in porphyran.. Cleaves the sulfated polysaccharide porphyran at the (1-&gt;4) linkages between beta-D-galactopyranose and alpha-L-galactopyranose-6-sulfate, forming mostly the disaccharide alpha-L-galactopyranose-6-sulfate-(1-&gt;3)-beta-D-galactose. This Zobellia galactanivorans (strain DSM 12802 / CCUG 47099 / CIP 106680 / NCIMB 13871 / Dsij) protein is Beta-porphyranase E (porE).